The following is a 238-amino-acid chain: Trypsin-3 (238 aa).

Residues 1 to 7 (FAVAFAA) form the signal peptide. A propeptide spans 8–15 (PIDDEDDK) (activation peptide). One can recognise a Peptidase S1 domain in the interval 16–236 (IVGGYECRKN…YRSWISSTMS (221 aa)). Intrachain disulfides connect Cys-22/Cys-152, Cys-40/Cys-56, Cys-124/Cys-225, Cys-131/Cys-198, Cys-163/Cys-177, and Cys-188/Cys-212. His-55 serves as the catalytic Charge relay system. Ca(2+) contacts are provided by Glu-67, Asn-69, Val-72, and Glu-77. Asp-99 (charge relay system) is an active-site residue. Ser-192 functions as the Charge relay system in the catalytic mechanism.

It belongs to the peptidase S1 family. Ca(2+) serves as cofactor.

It localises to the secreted. The protein resides in the extracellular space. It catalyses the reaction Preferential cleavage: Arg-|-Xaa, Lys-|-Xaa.. This is Trypsin-3 from Salmo salar (Atlantic salmon).